Here is a 629-residue protein sequence, read N- to C-terminus: Replication protein A 70 kDa DNA-binding subunit D (629 aa).

The interval 112–135 (LDSKSGEEEAREPKKQKLEHSPVS) is disordered. The segment covering 115-131 (KSGEEEAREPKKQKLEH) has biased composition (basic and acidic residues). The OB DNA-binding region spans 194–280 (WTIKVRVTNK…QNDYEMTLNE (87 aa)). The segment at 492–512 (CKTCNKKVTEALDSGYWCEGC) adopts a C4-type zinc-finger fold.

This sequence belongs to the replication factor A protein 1 family. In terms of assembly, heterotrimer of RPA1, RPA2 and RPA3 (canonical replication protein A complex).

The protein resides in the nucleus. Functionally, component of the replication protein A complex (RPA) required for DNA recombination, repair and replication. The activity of RPA is mediated by single-stranded DNA binding and protein interactions. Probably involved in repair of double-strand DNA breaks (DSBs) induced by genotoxic stresses. The polypeptide is Replication protein A 70 kDa DNA-binding subunit D (RPA1D) (Arabidopsis thaliana (Mouse-ear cress)).